A 514-amino-acid chain; its full sequence is Putative thymidine phosphorylase (514 aa).

The protein belongs to the thymidine/pyrimidine-nucleoside phosphorylase family. Type 2 subfamily.

The enzyme catalyses thymidine + phosphate = 2-deoxy-alpha-D-ribose 1-phosphate + thymine. The chain is Putative thymidine phosphorylase from Sphingopyxis alaskensis (strain DSM 13593 / LMG 18877 / RB2256) (Sphingomonas alaskensis).